Here is a 320-residue protein sequence, read N- to C-terminus: ATP-dependent 6-phosphofructokinase (320 aa).

G12 is a binding site for ATP. Residues 22 to 26 (RGVVR) and 55 to 60 (RYSVSD) contribute to the ADP site. ATP-binding positions include 73 to 74 (RF) and 103 to 106 (GDGS). Residue D104 coordinates Mg(2+). 126–128 (TID) contributes to the substrate binding site. D128 (proton acceptor) is an active-site residue. R155 is an ADP binding site. Substrate is bound by residues R163 and 170 to 172 (MGR). ADP is bound by residues 186–188 (GCE), K212, and 214–216 (KKH). Substrate-binding positions include E223, R244, and 250–253 (HIQR).

The protein belongs to the phosphofructokinase type A (PFKA) family. ATP-dependent PFK group I subfamily. Prokaryotic clade 'B1' sub-subfamily. As to quaternary structure, homotetramer. Requires Mg(2+) as cofactor.

The protein localises to the cytoplasm. It catalyses the reaction beta-D-fructose 6-phosphate + ATP = beta-D-fructose 1,6-bisphosphate + ADP + H(+). The protein operates within carbohydrate degradation; glycolysis; D-glyceraldehyde 3-phosphate and glycerone phosphate from D-glucose: step 3/4. Allosterically activated by ADP and other diphosphonucleosides, and allosterically inhibited by phosphoenolpyruvate. Its function is as follows. Catalyzes the phosphorylation of D-fructose 6-phosphate to fructose 1,6-bisphosphate by ATP, the first committing step of glycolysis. In Salmonella gallinarum (strain 287/91 / NCTC 13346), this protein is ATP-dependent 6-phosphofructokinase.